Consider the following 264-residue polypeptide: Regulator of cytoskeleton and endocytosis RVS161 (264 aa).

A BAR domain is found at 15-239 (ASVIVKDVDK…LDPASRDEYA (225 aa)).

Its subcellular location is the cytoplasm. The protein localises to the cytoskeleton. In terms of biological role, component of a cytoskeletal structure that is required for the formation of endocytic vesicles at the plasma membrane level. Plays an important role in virulence. In Candida albicans (strain SC5314 / ATCC MYA-2876) (Yeast), this protein is Regulator of cytoskeleton and endocytosis RVS161 (RVS161).